A 145-amino-acid polypeptide reads, in one-letter code: Superoxide dismutase [Mn/Fe] (145 aa).

The Fe(3+) site is built by histidine 10 and histidine 64. Residues histidine 10 and histidine 64 each coordinate Mn(2+). A disordered region spans residues 126–145 (TSTANQDTPISEGKKPILGL).

This sequence belongs to the iron/manganese superoxide dismutase family. It depends on Mn(2+) as a cofactor. Fe(3+) is required as a cofactor.

It catalyses the reaction 2 superoxide + 2 H(+) = H2O2 + O2. Destroys superoxide anion radicals which are normally produced within the cells and which are toxic to biological systems. Catalyzes the dismutation of superoxide anion radicals into O2 and H2O2 by successive reduction and oxidation of the transition metal ion at the active site. The polypeptide is Superoxide dismutase [Mn/Fe] (sodA) (Streptococcus mitis).